A 449-amino-acid chain; its full sequence is mRNA-capping enzyme subunit alpha (449 aa).

The active-site N6-GMP-lysine intermediate is the Lys66. A disordered region spans residues 405–449 (DERKNGAYQHHSSSFSESRQQPKAEPVAEKKQTEPKYVDDDDWSD). Residues 414–423 (HHSSSFSESR) are compositionally biased toward polar residues. The span at 424-442 (QQPKAEPVAEKKQTEPKYV) shows a compositional bias: basic and acidic residues.

The protein belongs to the eukaryotic GTase family. In terms of assembly, heterodimer. The mRNA-capping enzyme is composed of two separate chains alpha and beta, respectively a mRNA guanylyltransferase and an mRNA 5'-triphosphate monophosphatase.

It is found in the nucleus. The enzyme catalyses a 5'-end diphospho-ribonucleoside in mRNA + GTP + H(+) = a 5'-end (5'-triphosphoguanosine)-ribonucleoside in mRNA + diphosphate. In terms of biological role, second step of mRNA capping. Transfer of the GMP moiety of GTP to the 5'-end of RNA via an enzyme-GMP covalent reaction intermediate. The polypeptide is mRNA-capping enzyme subunit alpha (CEG1) (Candida glabrata (strain ATCC 2001 / BCRC 20586 / JCM 3761 / NBRC 0622 / NRRL Y-65 / CBS 138) (Yeast)).